The following is a 576-amino-acid chain: 5'-nucleotidase (576 aa).

The N-terminal stretch at 1 to 28 is a signal peptide; sequence MRPAAAKVPKWLLLALSALLPQWPAASA. Zn(2+) is bound by residues D38 and H40. A disulfide bond links C53 and C59. N55 carries N-linked (GlcNAc...) asparagine glycosylation. D87, N119, H222, and H245 together coordinate Zn(2+). N-linked (GlcNAc...) asparagine glycans are attached at residues N313 and N335. 2 disulfides stabilise this stretch: C355/C360 and C367/C389. R356 serves as a coordination point for AMP. R356 provides a ligand contact to IMP. Residues N392 and R397 each coordinate AMP. The IMP site is built by N392 and R397. N-linked (GlcNAc...) asparagine glycosylation is present at N405. F419 is an AMP binding site. Position 419 (F419) interacts with IMP. A disulfide bridge connects residues C478 and C481. AMP contacts are provided by Y502 and D508. 2 residues coordinate IMP: Y502 and D508. S551 carries GPI-anchor amidated serine lipidation. A propeptide spans 552–576 (removed in mature form); that stretch reads AASHYQGSFPLVILSFWAMILILYQ.

This sequence belongs to the 5'-nucleotidase family. In terms of assembly, homodimer. Requires Zn(2+) as cofactor. Expressed at high levels in the placenta, kidney, lung and stomach and at lower levels in the thymus, spleen, skeletal muscle and esophagus.

It localises to the cell membrane. The catalysed reaction is a ribonucleoside 5'-phosphate + H2O = a ribonucleoside + phosphate. It catalyses the reaction a 2'-deoxyribonucleoside 5'-phosphate + H2O = a 2'-deoxyribonucleoside + phosphate. The enzyme catalyses dTMP + H2O = thymidine + phosphate. It carries out the reaction CMP + H2O = cytidine + phosphate. The catalysed reaction is IMP + H2O = inosine + phosphate. It catalyses the reaction AMP + H2O = adenosine + phosphate. The enzyme catalyses GMP + H2O = guanosine + phosphate. It carries out the reaction UMP + H2O = uridine + phosphate. The catalysed reaction is dAMP + H2O = 2'-deoxyadenosine + phosphate. It catalyses the reaction dCMP + H2O = 2'-deoxycytidine + phosphate. Functionally, catalyzes the hydrolysis of nucleotide monophosphates, releasing inorganic phosphate and the corresponding nucleoside. Hydrolyzes IMP. Shows a preference for ribonucleotide monophosphates over their equivalent deoxyribose forms. Although AMP is the preferred substrate can also hydrolyze UMP, GMP, CMP, dAMP, dCMP, dTMP, NAD and NMN. This is 5'-nucleotidase (Nt5e) from Mus musculus (Mouse).